Here is a 242-residue protein sequence, read N- to C-terminus: Biosynthetic peptidoglycan transglycosylase (242 aa).

The chain crosses the membrane as a helical span at residues 19-39 (ILVVLAVFWGGGIALFSVVPV).

It belongs to the glycosyltransferase 51 family.

It localises to the cell inner membrane. The enzyme catalyses [GlcNAc-(1-&gt;4)-Mur2Ac(oyl-L-Ala-gamma-D-Glu-L-Lys-D-Ala-D-Ala)](n)-di-trans,octa-cis-undecaprenyl diphosphate + beta-D-GlcNAc-(1-&gt;4)-Mur2Ac(oyl-L-Ala-gamma-D-Glu-L-Lys-D-Ala-D-Ala)-di-trans,octa-cis-undecaprenyl diphosphate = [GlcNAc-(1-&gt;4)-Mur2Ac(oyl-L-Ala-gamma-D-Glu-L-Lys-D-Ala-D-Ala)](n+1)-di-trans,octa-cis-undecaprenyl diphosphate + di-trans,octa-cis-undecaprenyl diphosphate + H(+). Its pathway is cell wall biogenesis; peptidoglycan biosynthesis. Its function is as follows. Peptidoglycan polymerase that catalyzes glycan chain elongation from lipid-linked precursors. The protein is Biosynthetic peptidoglycan transglycosylase of Citrobacter koseri (strain ATCC BAA-895 / CDC 4225-83 / SGSC4696).